The primary structure comprises 88 residues: MSSFDKTMKFNFSDDSAETNVEEVLNTVYDALQEKGYNPINQIVGYLLSGDPAYIPRHRDARNLIRKLERDELIEELVKSYLEQHKEA.

The protein belongs to the UPF0297 family.

The protein is UPF0297 protein RBAM_024500 of Bacillus velezensis (strain DSM 23117 / BGSC 10A6 / LMG 26770 / FZB42) (Bacillus amyloliquefaciens subsp. plantarum).